The chain runs to 190 residues: Cytoglobin (190 aa).

The segment at 1-21 (MEKVPGDMEIERRERNEELSE) is disordered. Residues 18-167 (ELSEAERKAV…IYSHVTAAYK (150 aa)) form the Globin domain. An intrachain disulfide couples cysteine 38 to cysteine 83. Heme b is bound by residues histidine 81 and histidine 113.

It belongs to the globin family. Monomeric. Homodimer; disulfide-linked in vitro. Also homooligomeric in vitro. The formation of an intramolecular disulfide bond between cysteines Cys-38 and Cys-83 specifically enhances the nitrite reductase activity. In terms of tissue distribution, widely expressed (at protein level).

It is found in the cytoplasm. Its subcellular location is the nucleus. The enzyme catalyses Fe(II)-heme b-[protein] + nitric oxide + O2 = Fe(III)-heme b-[protein] + nitrate. The catalysed reaction is Fe(III)-heme b-[protein] + nitric oxide + H2O = Fe(II)-heme b-[protein] + nitrite + 2 H(+). It carries out the reaction 2 superoxide + 2 H(+) = H2O2 + O2. It catalyses the reaction H2O2 + AH2 = A + 2 H2O. The nitric oxide dioxygenase activity is activated by a reducing system composed of cytochrome b5, its upstream reductase CYB5R3 and NADH. In terms of biological role, probable multifunctional globin with a hexacoordinated heme iron required for the catalysis of various reactions depending on redox condition of the cell as well as oxygen availability. Has a nitric oxide dioxygenase (NOD) activity and is most probably involved in cell-mediated and oxygen-dependent nitric oxide consumption. By scavenging this second messenger may regulate several biological processes including endothelium-mediated vasodilation and vascular tone. Under normoxic conditions functions as a nitric oxide dioxygenase (NOD) but under hypoxic conditions the globin may switch its function to that of a nitrite (NO2) reductase (NiR), generating nitric oxide. Could also have peroxidase and superoxide dismutase activities, detoxifying reactive oxygen species and protecting cells against oxidative stress. Also binds dioxygen with low affinity and could function as an oxygen sensor but has probably no function as a respiratory oxygen carrier. The chain is Cytoglobin from Rattus norvegicus (Rat).